The following is a 929-amino-acid chain: Dual specificity protein phosphatase PHS1 (929 aa).

Disordered stretches follow at residues 1–27 (MAEP…LVHD) and 545–618 (PESP…SLSS). 2 stretches are compositionally biased toward basic and acidic residues: residues 552 to 580 (HGHE…ESDM) and 591 to 606 (ENKE…ESWH). Residues 703–848 (KPSMIQENLF…LINLDKKCHG (146 aa)) enclose the Tyrosine-protein phosphatase domain. Catalysis depends on C792, which acts as the Phosphocysteine intermediate. Residue 792-798 (CFEGRSR) coordinates substrate. The short motif at 903-911 (QKALEALKL) is the Nuclear export signal element.

Interacts with MPK18. Expressed in roots, leaves and flowers.

The protein resides in the cytoplasm. It catalyses the reaction O-phospho-L-seryl-[protein] + H2O = L-seryl-[protein] + phosphate. The enzyme catalyses O-phospho-L-threonyl-[protein] + H2O = L-threonyl-[protein] + phosphate. The catalysed reaction is O-phospho-L-tyrosyl-[protein] + H2O = L-tyrosyl-[protein] + phosphate. Probable dual specificity phosphatase that binds and dephosphorylates MPK18, modulating the organization and dynamics of cortical microtubules. Acts as a negative regulator of abscisic acid (ABA) signaling during seed germination and light-induced stomata aperture. The protein is Dual specificity protein phosphatase PHS1 (PHS1) of Arabidopsis thaliana (Mouse-ear cress).